The primary structure comprises 351 residues: Nicotinate-nucleotide--dimethylbenzimidazole phosphoribosyltransferase (351 aa).

E317 acts as the Proton acceptor in catalysis.

The protein belongs to the CobT family.

It catalyses the reaction 5,6-dimethylbenzimidazole + nicotinate beta-D-ribonucleotide = alpha-ribazole 5'-phosphate + nicotinate + H(+). It participates in nucleoside biosynthesis; alpha-ribazole biosynthesis; alpha-ribazole from 5,6-dimethylbenzimidazole: step 1/2. In terms of biological role, catalyzes the synthesis of alpha-ribazole-5'-phosphate from nicotinate mononucleotide (NAMN) and 5,6-dimethylbenzimidazole (DMB). This chain is Nicotinate-nucleotide--dimethylbenzimidazole phosphoribosyltransferase, found in Pseudomonas aeruginosa (strain UCBPP-PA14).